Consider the following 896-residue polypeptide: Protein translocase subunit SecA (896 aa).

ATP is bound by residues Q87, 105–109 (GEGKT), and D507. The disordered stretch occupies residues 853–879 (ESLSENDEASETQTFRRQEKKIGRNDP). A compositionally biased stretch (basic and acidic residues) spans 866 to 876 (TFRRQEKKIGR). Residues C880, C882, C891, and H892 each coordinate Zn(2+).

It belongs to the SecA family. As to quaternary structure, monomer and homodimer. Part of the essential Sec protein translocation apparatus which comprises SecA, SecYEG and auxiliary proteins SecDF-YajC and YidC. Zn(2+) is required as a cofactor.

The protein localises to the cell inner membrane. Its subcellular location is the cytoplasm. It catalyses the reaction ATP + H2O + cellular proteinSide 1 = ADP + phosphate + cellular proteinSide 2.. Part of the Sec protein translocase complex. Interacts with the SecYEG preprotein conducting channel. Has a central role in coupling the hydrolysis of ATP to the transfer of proteins into and across the cell membrane, serving both as a receptor for the preprotein-SecB complex and as an ATP-driven molecular motor driving the stepwise translocation of polypeptide chains across the membrane. This Legionella pneumophila subsp. pneumophila (strain Philadelphia 1 / ATCC 33152 / DSM 7513) protein is Protein translocase subunit SecA.